We begin with the raw amino-acid sequence, 30 residues long: Cyclotide vdif-A (30 aa).

The cyclopeptide (Gly-Asn) cross-link spans glycine 1–asparagine 30. Disulfide bonds link cysteine 4–cysteine 20, cysteine 8–cysteine 22, and cysteine 13–cysteine 27.

Belongs to the cyclotide family. Bracelet subfamily. In terms of processing, this is a cyclic peptide.

Functionally, probably participates in a plant defense mechanism. The protein is Cyclotide vdif-A of Viola diffusa.